Here is a 233-residue protein sequence, read N- to C-terminus: Upstream activation factor subunit spp27 (233 aa).

The DEK-C domain maps to 1–53 (MEEYETDIKQILGTVDRQTVSAKQVRQLLEERRKVDLSAHKKDLNALILKCFD). 2 disordered regions span residues 55 to 122 (TAAP…KPMK) and 194 to 233 (IPDD…ESTA). The region spanning 116–193 (PLNKPMKLSP…NKYLTNLMTK (78 aa)) is the SWIB/MDM2 domain. Basic and acidic residues predominate over residues 194-208 (IPDDQLPKPQPKNEE).

In terms of assembly, component of the UAF (upstream activation factor) complex which consists of spp27/uaf30, rrn5, rrn10, and histones H3 and H4. Interacts with rrn10.

The protein resides in the cytoplasm. It is found in the nucleus. Component of the UAF (upstream activation factor) complex which interacts with the upstream element of the RNA polymerase I promoter and forms a stable preinitiation complex. UAF seems to stimulate basal transcription to a fully activated level. This chain is Upstream activation factor subunit spp27 (spp27), found in Schizosaccharomyces pombe (strain 972 / ATCC 24843) (Fission yeast).